The sequence spans 132 residues: Small ribosomal subunit protein uS8 (132 aa).

As to quaternary structure, part of the 30S ribosomal subunit. Contacts proteins S5 and S12. In terms of processing, a modified and unmodified form exist; the nature of the modification(s) is unknown.

Its function is as follows. One of the primary rRNA binding proteins, it binds directly to 16S rRNA central domain where it helps coordinate assembly of the platform of the 30S subunit. The chain is Small ribosomal subunit protein uS8 from Rhodopseudomonas palustris (strain ATCC BAA-98 / CGA009).